Consider the following 827-residue polypeptide: Leucine--tRNA ligase (827 aa).

The 'HIGH' region motif lies at 42–52 (PYPSGKLHMGH). The short motif at 581–585 (KMSKS) is the 'KMSKS' region element. K584 contacts ATP.

It belongs to the class-I aminoacyl-tRNA synthetase family.

It is found in the cytoplasm. The catalysed reaction is tRNA(Leu) + L-leucine + ATP = L-leucyl-tRNA(Leu) + AMP + diphosphate. The protein is Leucine--tRNA ligase of Desulforamulus reducens (strain ATCC BAA-1160 / DSM 100696 / MI-1) (Desulfotomaculum reducens).